The sequence spans 188 residues: Elongation factor P (188 aa).

The protein belongs to the elongation factor P family.

It is found in the cytoplasm. It participates in protein biosynthesis; polypeptide chain elongation. Its function is as follows. Involved in peptide bond synthesis. Stimulates efficient translation and peptide-bond synthesis on native or reconstituted 70S ribosomes in vitro. Probably functions indirectly by altering the affinity of the ribosome for aminoacyl-tRNA, thus increasing their reactivity as acceptors for peptidyl transferase. This chain is Elongation factor P, found in Streptomyces coelicolor (strain ATCC BAA-471 / A3(2) / M145).